The following is a 118-amino-acid chain: Large ribosomal subunit protein bL20 (118 aa).

Belongs to the bacterial ribosomal protein bL20 family.

In terms of biological role, binds directly to 23S ribosomal RNA and is necessary for the in vitro assembly process of the 50S ribosomal subunit. It is not involved in the protein synthesizing functions of that subunit. This is Large ribosomal subunit protein bL20 from Sulfurimonas denitrificans (strain ATCC 33889 / DSM 1251) (Thiomicrospira denitrificans (strain ATCC 33889 / DSM 1251)).